We begin with the raw amino-acid sequence, 129 residues long: uncharacterized protein (129 aa).

Transmembrane regions (helical) follow at residues 22-42 (LASS…FFFF), 55-75 (VGSF…FFFF), and 88-108 (LPFT…FFFF).

It is found in the membrane. This is an uncharacterized protein from Saccharomyces cerevisiae (strain ATCC 204508 / S288c) (Baker's yeast).